Here is a 98-residue protein sequence, read N- to C-terminus: Small ribosomal subunit protein bS20 (98 aa).

Basic residues predominate over residues 1–12 (MAPRKPSKKVGP). A disordered region spans residues 1–31 (MAPRKPSKKVGPQKRPSAEKRVITSKKKQLR).

The protein belongs to the bacterial ribosomal protein bS20 family.

Its function is as follows. Binds directly to 16S ribosomal RNA. This Chlamydia trachomatis serovar A (strain ATCC VR-571B / DSM 19440 / HAR-13) protein is Small ribosomal subunit protein bS20.